A 145-amino-acid polypeptide reads, in one-letter code: Large ribosomal subunit protein uL13 (145 aa).

It belongs to the universal ribosomal protein uL13 family. Part of the 50S ribosomal subunit.

This protein is one of the early assembly proteins of the 50S ribosomal subunit, although it is not seen to bind rRNA by itself. It is important during the early stages of 50S assembly. This is Large ribosomal subunit protein uL13 from Geobacillus sp. (strain WCH70).